Reading from the N-terminus, the 250-residue chain is tRNA (guanine-N(7)-)-methyltransferase (250 aa).

4 residues coordinate S-adenosyl-L-methionine: E79, E104, D131, and D154. D154 is a catalytic residue. Substrate contacts are provided by residues K158, D190, and 228–231 (TKFE).

The protein belongs to the class I-like SAM-binding methyltransferase superfamily. TrmB family.

The catalysed reaction is guanosine(46) in tRNA + S-adenosyl-L-methionine = N(7)-methylguanosine(46) in tRNA + S-adenosyl-L-homocysteine. The protein operates within tRNA modification; N(7)-methylguanine-tRNA biosynthesis. In terms of biological role, catalyzes the formation of N(7)-methylguanine at position 46 (m7G46) in tRNA. The protein is tRNA (guanine-N(7)-)-methyltransferase of Actinobacillus pleuropneumoniae serotype 5b (strain L20).